A 388-amino-acid polypeptide reads, in one-letter code: Alanine racemase (388 aa).

The active-site Proton acceptor; specific for D-alanine is the Lys-44. Lys-44 is modified (N6-(pyridoxal phosphate)lysine). A substrate-binding site is contributed by Arg-142. Tyr-273 acts as the Proton acceptor; specific for L-alanine in catalysis. Met-321 serves as a coordination point for substrate.

It belongs to the alanine racemase family. It depends on pyridoxal 5'-phosphate as a cofactor.

It catalyses the reaction L-alanine = D-alanine. Its pathway is amino-acid biosynthesis; D-alanine biosynthesis; D-alanine from L-alanine: step 1/1. Its function is as follows. Catalyzes the interconversion of L-alanine and D-alanine. May also act on other amino acids. In Mycobacterium leprae (strain TN), this protein is Alanine racemase (alr).